The sequence spans 399 residues: S-adenosylmethionine synthase (399 aa).

Residue H16 participates in ATP binding. Residue D18 coordinates Mg(2+). A K(+)-binding site is contributed by E44. E57 and Q100 together coordinate L-methionine. The interval 100-110 is flexible loop; that stretch reads QSPDIAQGVDD. Residues 174–176, 241–242, D250, 256–257, A273, and K277 each bind ATP; these read DAK, RF, and RK. D250 lines the L-methionine pocket. K281 is an L-methionine binding site.

Belongs to the AdoMet synthase family. In terms of assembly, homotetramer; dimer of dimers. It depends on Mg(2+) as a cofactor. The cofactor is K(+).

Its subcellular location is the cytoplasm. It catalyses the reaction L-methionine + ATP + H2O = S-adenosyl-L-methionine + phosphate + diphosphate. The protein operates within amino-acid biosynthesis; S-adenosyl-L-methionine biosynthesis; S-adenosyl-L-methionine from L-methionine: step 1/1. Functionally, catalyzes the formation of S-adenosylmethionine (AdoMet) from methionine and ATP. The overall synthetic reaction is composed of two sequential steps, AdoMet formation and the subsequent tripolyphosphate hydrolysis which occurs prior to release of AdoMet from the enzyme. The chain is S-adenosylmethionine synthase from Latilactobacillus sakei subsp. sakei (strain 23K) (Lactobacillus sakei subsp. sakei).